A 198-amino-acid polypeptide reads, in one-letter code: Peptidyl-tRNA hydrolase (198 aa).

Tyr17 serves as a coordination point for tRNA. His22 (proton acceptor) is an active-site residue. Positions 74, 76, and 122 each coordinate tRNA.

It belongs to the PTH family. Monomer.

The protein localises to the cytoplasm. It carries out the reaction an N-acyl-L-alpha-aminoacyl-tRNA + H2O = an N-acyl-L-amino acid + a tRNA + H(+). Its function is as follows. Hydrolyzes ribosome-free peptidyl-tRNAs (with 1 or more amino acids incorporated), which drop off the ribosome during protein synthesis, or as a result of ribosome stalling. Functionally, catalyzes the release of premature peptidyl moieties from peptidyl-tRNA molecules trapped in stalled 50S ribosomal subunits, and thus maintains levels of free tRNAs and 50S ribosomes. The protein is Peptidyl-tRNA hydrolase of Kineococcus radiotolerans (strain ATCC BAA-149 / DSM 14245 / SRS30216).